Here is an 85-residue protein sequence, read N- to C-terminus: Arminin 6494 (85 aa).

A signal peptide spans 1-18 (MKTVFAILFLAFIALTYA). A propeptide spanning residues 19–57 (RSYEDVKEEIKNEVEKEILEDLEEESDELNDKRKEINDA) is cleaved from the precursor. Ala-82 carries the post-translational modification Alanine amide.

It belongs to the arminin family. In terms of tissue distribution, expressed in entodermal epithelium along the body column.

The protein resides in the secreted. It localises to the target cell membrane. Functionally, antimicrobial peptide with a broad-spectrum antimicrobial activity. Keeps its antibacterial activity under a wide range of salt concentrations that mimic physiological conditions of human blood, which is surprising, since Hydra is an obligate freshwater animal with nearly no salt tolerance. Does not affect red blood cells. The protein is Arminin 6494 of Hydra vulgaris (Hydra).